Reading from the N-terminus, the 206-residue chain is Pyridoxine/pyridoxamine 5'-phosphate oxidase (206 aa).

FMN-binding positions include 53-58 (RMVLLK), 68-69 (YT), K75, and Q97. Residue K58 coordinates substrate. Residues Y115, R119, and S123 each coordinate substrate. Residues 132–133 (QS) and W177 contribute to the FMN site. Substrate is bound at residue 183–185 (RLH). R187 provides a ligand contact to FMN.

Belongs to the pyridoxamine 5'-phosphate oxidase family. As to quaternary structure, homodimer. The cofactor is FMN.

The catalysed reaction is pyridoxamine 5'-phosphate + O2 + H2O = pyridoxal 5'-phosphate + H2O2 + NH4(+). The enzyme catalyses pyridoxine 5'-phosphate + O2 = pyridoxal 5'-phosphate + H2O2. The protein operates within cofactor metabolism; pyridoxal 5'-phosphate salvage; pyridoxal 5'-phosphate from pyridoxamine 5'-phosphate: step 1/1. It participates in cofactor metabolism; pyridoxal 5'-phosphate salvage; pyridoxal 5'-phosphate from pyridoxine 5'-phosphate: step 1/1. In terms of biological role, catalyzes the oxidation of either pyridoxine 5'-phosphate (PNP) or pyridoxamine 5'-phosphate (PMP) into pyridoxal 5'-phosphate (PLP). This Rhizobium leguminosarum bv. trifolii (strain WSM2304) protein is Pyridoxine/pyridoxamine 5'-phosphate oxidase.